The sequence spans 429 residues: Enolase (429 aa).

Glutamine 167 serves as a coordination point for (2R)-2-phosphoglycerate. Glutamate 209 acts as the Proton donor in catalysis. 3 residues coordinate Mg(2+): aspartate 246, glutamate 289, and aspartate 316. The (2R)-2-phosphoglycerate site is built by lysine 341, arginine 370, serine 371, and lysine 392. The active-site Proton acceptor is lysine 341.

This sequence belongs to the enolase family. In terms of assembly, component of the RNA degradosome, a multiprotein complex involved in RNA processing and mRNA degradation. Mg(2+) is required as a cofactor.

It is found in the cytoplasm. The protein localises to the secreted. It localises to the cell surface. The catalysed reaction is (2R)-2-phosphoglycerate = phosphoenolpyruvate + H2O. It participates in carbohydrate degradation; glycolysis; pyruvate from D-glyceraldehyde 3-phosphate: step 4/5. In terms of biological role, catalyzes the reversible conversion of 2-phosphoglycerate (2-PG) into phosphoenolpyruvate (PEP). It is essential for the degradation of carbohydrates via glycolysis. The chain is Enolase from Pseudomonas putida (strain ATCC 47054 / DSM 6125 / CFBP 8728 / NCIMB 11950 / KT2440).